We begin with the raw amino-acid sequence, 271 residues long: Probable septum site-determining protein MinC (271 aa).

The segment at arginine 106–arginine 125 is disordered. Positions serine 110 to alanine 119 are enriched in low complexity.

It belongs to the MinC family. Interacts with MinD and FtsZ.

Cell division inhibitor that blocks the formation of polar Z ring septums. Rapidly oscillates between the poles of the cell to destabilize FtsZ filaments that have formed before they mature into polar Z rings. Prevents FtsZ polymerization. The chain is Probable septum site-determining protein MinC from Burkholderia thailandensis (strain ATCC 700388 / DSM 13276 / CCUG 48851 / CIP 106301 / E264).